Here is a 304-residue protein sequence, read N- to C-terminus: MATH domain and coiled-coil domain-containing protein At2g42470 (304 aa).

The 118-residue stretch at 6–123 folds into the MATH domain; that stretch reads QTSFTFEIDN…NNKLIIEVQV (118 aa). A coiled-coil region spans residues 219–292; the sequence is FKVDWLKKKL…LKIELDRTRR (74 aa).

The protein is MATH domain and coiled-coil domain-containing protein At2g42470 of Arabidopsis thaliana (Mouse-ear cress).